The primary structure comprises 359 residues: CMP-N-acetylneuraminate-poly-alpha-2,8-sialyltransferase (359 aa).

Residues 1–7 are Cytoplasmic-facing; it reads MRSIRKR. The helical; Signal-anchor for type II membrane protein transmembrane segment at 8–20 threads the bilayer; that stretch reads WTICTISLLLIFY. Topologically, residues 21–359 are lumenal; the sequence is KTKEMARTEE…KLTTGKCIKQ (339 aa). N-linked (GlcNAc...) asparagine glycosylation is found at Asn-50, Asn-74, and Asn-119. 2 cysteine pairs are disulfide-bonded: Cys-142–Cys-292 and Cys-156–Cys-356. Asn-147 and Asn-170 together coordinate CMP-N-acetyl-beta-neuraminate. Residues Asn-204 and Asn-219 are each glycosylated (N-linked (GlcNAc...) asparagine). CMP-N-acetyl-beta-neuraminate-binding residues include Ser-279, Thr-280, Gly-281, and Trp-301. His-331 functions as the Proton donor/acceptor in the catalytic mechanism.

It belongs to the glycosyltransferase 29 family. In terms of processing, autopolysialylated.

The protein resides in the golgi apparatus membrane. The protein localises to the secreted. It catalyses the reaction [N-acetyl-alpha-D-neuraminosyl-(2-&gt;8)](n) + CMP-N-acetyl-beta-neuraminate = [N-acetyl-alpha-D-neuraminosyl-(2-&gt;8)](n+1) + CMP + H(+). Its function is as follows. Catalyzes the transfer of a sialic acid from a CMP-linked sialic acid donor onto a terminal alpha-2,3-, alpha-2,6-, or alpha-2,8-linked sialic acid of an N-linked glycan protein acceptor through alpha-2,8-linkages. Therefore, participates in polysialic acid synthesis on various sialylated N-acetyllactosaminyl oligosaccharides, including NCAM1 N-glycans, FETUB N-glycans and AHSG. It is noteworthy that alpha-2,3-linked sialic acid is apparently a better acceptor than alpha-2,6-linked sialic acid. In Bos taurus (Bovine), this protein is CMP-N-acetylneuraminate-poly-alpha-2,8-sialyltransferase (ST8SIA4).